Here is a 579-residue protein sequence, read N- to C-terminus: 2-isopropylmalate synthase (579 aa).

A Pyruvate carboxyltransferase domain is found at 40–314 (PRWCAVDLRD…DPMIDFSDID (275 aa)). 4 residues coordinate Mg(2+): Asp49, His253, His255, and Asn289. The tract at residues 456 to 579 (SDEEQAQWGR…VNRAVRDAQA (124 aa)) is regulatory domain.

The protein belongs to the alpha-IPM synthase/homocitrate synthase family. LeuA type 2 subfamily. As to quaternary structure, homodimer. The cofactor is Mg(2+).

Its subcellular location is the cytoplasm. It carries out the reaction 3-methyl-2-oxobutanoate + acetyl-CoA + H2O = (2S)-2-isopropylmalate + CoA + H(+). The protein operates within amino-acid biosynthesis; L-leucine biosynthesis; L-leucine from 3-methyl-2-oxobutanoate: step 1/4. Catalyzes the condensation of the acetyl group of acetyl-CoA with 3-methyl-2-oxobutanoate (2-ketoisovalerate) to form 3-carboxy-3-hydroxy-4-methylpentanoate (2-isopropylmalate). This chain is 2-isopropylmalate synthase, found in Paenarthrobacter aurescens (strain TC1).